The following is a 469-amino-acid chain: tRNA(Ile)-lysidine synthase (469 aa).

Residue 26 to 31 (SGGPDS) coordinates ATP.

This sequence belongs to the tRNA(Ile)-lysidine synthase family.

The protein localises to the cytoplasm. The enzyme catalyses cytidine(34) in tRNA(Ile2) + L-lysine + ATP = lysidine(34) in tRNA(Ile2) + AMP + diphosphate + H(+). In terms of biological role, ligates lysine onto the cytidine present at position 34 of the AUA codon-specific tRNA(Ile) that contains the anticodon CAU, in an ATP-dependent manner. Cytidine is converted to lysidine, thus changing the amino acid specificity of the tRNA from methionine to isoleucine. This chain is tRNA(Ile)-lysidine synthase, found in Clostridium perfringens (strain ATCC 13124 / DSM 756 / JCM 1290 / NCIMB 6125 / NCTC 8237 / Type A).